The following is a 241-amino-acid chain: MLAPTAAVNVTNEGENDNVMIDTTRGEIEFSDSAVNGTMDIEGAPKFAPAKTSAEKKRGAKPQMRRVPIPPHRMTPLRNVWPKLYPPLVEHLLLQVRMNTKSRSVELRESKATKDPGALQKGMDFVQAFALGFDIDDAIALLRLDDLYIDTFEIKDVKTLQGDHLSRAIGRIAGQGGKTKFAIENASRTRIVLADSKIHILGGFTNIRIAKDAVVSLILGSPPGKVYANLRNAAARAKERI.

The disordered stretch occupies residues 48-71 (APAKTSAEKKRGAKPQMRRVPIPP). Thr-52 carries the post-translational modification Phosphothreonine. A KH domain is found at 162 to 214 (GDHLSRAIGRIAGQGGKTKFAIENASRTRIVLADSKIHILGGFTNIRIAKDAV).

The protein belongs to the PNO1 family. As to quaternary structure, component of the small ribosomal subunit, ribosomal RNA processing complex (SSU RRP complex).

Its subcellular location is the cytoplasm. The protein localises to the nucleus. The protein resides in the nucleolus. Required for small ribosomal subunit (SSU) synthesis. Has a role in the processing of early nucleolar and late cytoplasmic pre-RNA species. In Schizosaccharomyces pombe (strain 972 / ATCC 24843) (Fission yeast), this protein is Pre-rRNA-processing protein pno1 (rbp28).